We begin with the raw amino-acid sequence, 266 residues long: Calpain small subunit 1 (266 aa).

Met1 is modified (N-acetylmethionine). Phosphoserine is present on Ser6. An EF-hand 1; atypical domain is found at 94 to 128 (EEVRQFRRLFAQLAGDDMEVSATELMNILNKVVTR). Residues Ala107, Asp110, Glu112, Glu117, Asp135, Asp150, Asp152, Thr154, Lys156, and Glu161 each contribute to the Ca(2+) site. EF-hand domains lie at 137–170 (FGLDTCRSMVAVMDSDTTGKLGFEEFKYLWNNIK), 167–202 (NNIKKWQAIYKQFDVDRSGTICSRELPGAFEAAGFH), 203–231 (LNEHLYNMIIRRYSDEAGNMDFDNFISCL), and 232–266 (VRLDAMFRAFKSLDKDGTGQIQVNIQEWLQLTMYS). An N6-acetyllysine modification is found at Lys177. Positions 180, 182, 184, 186, 191, and 223 each coordinate Ca(2+).

As to quaternary structure, homodimer or heterodimer of a large (catalytic) and a small (regulatory) subunit. In presence of calcium, the heterodimer dissociates. Post-translationally, the N-terminus is blocked.

The protein localises to the cytoplasm. It localises to the cell membrane. In terms of biological role, regulatory subunit of the calcium-regulated non-lysosomal thiol-protease which catalyzes limited proteolysis of substrates involved in cytoskeletal remodeling and signal transduction. Essential for embryonic development. The sequence is that of Calpain small subunit 1 (CAPNS1) from Oryctolagus cuniculus (Rabbit).